The chain runs to 212 residues: Large ribosomal subunit protein uL3 (212 aa).

It belongs to the universal ribosomal protein uL3 family. In terms of assembly, part of the 50S ribosomal subunit. Forms a cluster with proteins L14 and L19.

Its function is as follows. One of the primary rRNA binding proteins, it binds directly near the 3'-end of the 23S rRNA, where it nucleates assembly of the 50S subunit. The chain is Large ribosomal subunit protein uL3 from Ruminiclostridium cellulolyticum (strain ATCC 35319 / DSM 5812 / JCM 6584 / H10) (Clostridium cellulolyticum).